The following is a 79-amino-acid chain: Sulfur carrier protein TusA (79 aa).

C17 serves as the catalytic Cysteine persulfide intermediate.

It belongs to the sulfur carrier protein TusA family.

Its subcellular location is the cytoplasm. Functionally, sulfur carrier protein which probably makes part of a sulfur-relay system. The polypeptide is Sulfur carrier protein TusA (Actinobacillus succinogenes (strain ATCC 55618 / DSM 22257 / CCUG 43843 / 130Z)).